The chain runs to 308 residues: MASWEAQEELRELLHHLPEDDPPADLTHLLELDEMEPKVLCGENPGDEKLKKQVIKTPPMHPSTVTWHFGYKQKEDQQDNIKMRDWVPDPSKMSKSTCKRLILLGLYQACKAQEIIKMDYDVHWEKSVVNEQYFEVEYNCKMCRTVLHEPMPIMYDPETELWVKPGRLRGPLGSAVYTLKKHYERCLLTLPSLKGTRLPKRRCNPSRRYETFREHPPTRKRRSKEGIPTDQQPSTSNGDPMALLSGPCGPHSIQPPSCLLQELPKPEVGSPEMAVAMSGGPFWEEVYGDSIFATPLGSSEDQLLSQFD.

Residues 94–203 (SKSTCKRLIL…KGTRLPKRRC (110 aa)) mediate DNA binding. The interval 200–242 (KRRCNPSRRYETFREHPPTRKRRSKEGIPTDQQPSTSNGDPMA) is disordered. The span at 207 to 217 (RRYETFREHPP) shows a compositional bias: basic and acidic residues. A Nuclear localization signal motif is present at residues 217 to 226 (PTRKRRSKEG). A transactivation domain region spans residues 228–304 (PTDQQPSTSN…PLGSSEDQLL (77 aa)). Over residues 229-238 (TDQQPSTSNG) the composition is skewed to polar residues.

In terms of assembly, homodimer or homomultimer. Forms complexes with the host nuclear factors NFIA, NFIB, NFIC or NFIX.

The protein resides in the host nucleus. Functionally, transcriptional transactivator that activates the viral internal promoter (IP), thereby enhancing its own expression. This transactivation is repressed by nuclear factor I. Also transactivates the long terminal repeat (LTR) promoter, thereby inducing structural gene expression, initiating the late phase of infection. It is therefore a key regulator of viral gene expression. It directly binds to and activates DNA target sites of viral promoters and those of distinct cellular genes. Required for viral replication. In Simian foamy virus type 1 (SFVmac), this protein is Protein Bel-1 (bel1).